The sequence spans 225 residues: U2 small nuclear ribonucleoprotein B'' (225 aa).

The 80-residue stretch at 7–86 folds into the RRM 1 domain; it reads HTIYINNMND…KPMRIQYAKT (80 aa). A disordered region spans residues 99–145; that stretch reads ADKEKKKEKKKAKTVEQTATTTNKKPGQGTPNSANTQGNSTPNPQVP. N6-acetyllysine; alternate is present on lysine 111. Lysine 111 is covalently cross-linked (Glycyl lysine isopeptide (Lys-Gly) (interchain with G-Cter in SUMO2); alternate). The span at 113 to 123 shows a compositional bias: low complexity; it reads VEQTATTTNKK. Residues 127-141 are compositionally biased toward polar residues; the sequence is GTPNSANTQGNSTPN. Position 151 is a phosphotyrosine (tyrosine 151). The RRM 2 domain maps to 151 to 225; sequence YILFLNNLPE…HAMKITYAKK (75 aa).

The protein belongs to the RRM U1 A/B'' family. In terms of assembly, identified in the spliceosome B complex. Identified in the spliceosome C complex. Present in a spliceosome complex assembled in vitro, and composed of SNRPB2, HPRP8BP and CRNKL1. Contributes to the binding of stem loop IV of U2 snRNA with SNRPP1.

The protein localises to the nucleus. Involved in pre-mRNA splicing as component of the spliceosome. Associated with sn-RNP U2, where it contributes to the binding of stem loop IV of U2 snRNA. This is U2 small nuclear ribonucleoprotein B'' (SNRPB2) from Homo sapiens (Human).